The sequence spans 597 residues: Alkyldihydroxyacetonephosphate synthase (597 aa).

Residues 131 to 313 enclose the FAD-binding PCMH-type domain; that stretch reads IPRLPDIVVW…SEVTIKIFPI (183 aa). Residues 163–169, 232–238, 245–248, and 297–303 each bind FAD; these read PIGGGTS, DSIEFST, TRAS, and EGTLGVV. Arginine 444 serves as a coordination point for substrate. Residue tyrosine 507 is the Proton donor/acceptor of the active site. An important for enzyme activity region spans residues 544-546; the sequence is HHH. The short motif at 595 to 597 is the Microbody targeting signal element; sequence CKL.

This sequence belongs to the FAD-binding oxidoreductase/transferase type 4 family. Homodimer. The cofactor is FAD.

It localises to the peroxisome. It catalyses the reaction a long chain fatty alcohol + a 1-acylglycerone 3-phosphate = a 1-O-alkylglycerone 3-phosphate + a long-chain fatty acid + H(+). It functions in the pathway glycerolipid metabolism; ether lipid biosynthesis. In terms of biological role, catalyzes the exchange of an acyl for a long-chain alkyl group and the formation of the ether bond in the biosynthesis of ether phospholipids. In Caenorhabditis elegans, this protein is Alkyldihydroxyacetonephosphate synthase (ads-1).